The chain runs to 171 residues: UPF0312 protein SAOUHSC_03022 (171 aa).

The protein belongs to the UPF0312 family.

This Staphylococcus aureus (strain NCTC 8325 / PS 47) protein is UPF0312 protein SAOUHSC_03022.